A 370-amino-acid polypeptide reads, in one-letter code: MEYDRELHTEEMTLNFGPQHPSTHGVYRAIFTLDGEHIVNVENIIGYLHRGMEKLAESRTYTQFIPYTDRLDYLSGMLNELGYVQTVEKLAGIEVPERAEYIRIIMAELQRIASHQVFLGSMALDLNGHTPWMYFFRDREKVLDLLEMVCGSRMTTNYMRIGGVSYDLPEEFMPSLKSFLNDMDKSFIEYERIITGNEIFQARTKGVGIISGEKALAYGLTGPNLRASGIDLDLRRDAPYGIYDRFNFKVIVGKDGDCYERWIMRIDEMEESIKIIKQALEQIKEGPVLAKVPRLIKPPKGDIYHQIEGAKGVLGYYIVSDGCDKPYRIHIHGPSFVNIGAFPEMATGSTIQDAVAILASLDPILGEIDR.

This sequence belongs to the complex I 49 kDa subunit family. NDH-1 is composed of 14 different subunits. Subunits NuoB, C, D, E, F, and G constitute the peripheral sector of the complex.

The protein localises to the cell membrane. The catalysed reaction is a quinone + NADH + 5 H(+)(in) = a quinol + NAD(+) + 4 H(+)(out). Functionally, NDH-1 shuttles electrons from NADH, via FMN and iron-sulfur (Fe-S) centers, to quinones in the respiratory chain. The immediate electron acceptor for the enzyme in this species is believed to be a menaquinone. Couples the redox reaction to proton translocation (for every two electrons transferred, four hydrogen ions are translocated across the cytoplasmic membrane), and thus conserves the redox energy in a proton gradient. The chain is NADH-quinone oxidoreductase subunit D from Clostridium beijerinckii (strain ATCC 51743 / NCIMB 8052) (Clostridium acetobutylicum).